Reading from the N-terminus, the 198-residue chain is Holliday junction branch migration complex subunit RuvA (198 aa).

The domain I stretch occupies residues 1–63; it reads MYSYIIGVIT…EDASILYGFS (63 aa). The tract at residues 64–142 is domain II; the sequence is SQKERELFNL…KDFVPSEKPV (79 aa). Residues 143–153 are flexible linker; it reads NKEVKRSNDSE. The interval 153 to 198 is domain III; it reads EFAREALLQLGYFKNDVDAFIENTDISGLSIEDIMKKAMKSLDSSR.

The protein belongs to the RuvA family. As to quaternary structure, homotetramer. Forms an RuvA(8)-RuvB(12)-Holliday junction (HJ) complex. HJ DNA is sandwiched between 2 RuvA tetramers; dsDNA enters through RuvA and exits via RuvB. An RuvB hexamer assembles on each DNA strand where it exits the tetramer. Each RuvB hexamer is contacted by two RuvA subunits (via domain III) on 2 adjacent RuvB subunits; this complex drives branch migration. In the full resolvosome a probable DNA-RuvA(4)-RuvB(12)-RuvC(2) complex forms which resolves the HJ.

It is found in the cytoplasm. Its function is as follows. The RuvA-RuvB-RuvC complex processes Holliday junction (HJ) DNA during genetic recombination and DNA repair, while the RuvA-RuvB complex plays an important role in the rescue of blocked DNA replication forks via replication fork reversal (RFR). RuvA specifically binds to HJ cruciform DNA, conferring on it an open structure. The RuvB hexamer acts as an ATP-dependent pump, pulling dsDNA into and through the RuvAB complex. HJ branch migration allows RuvC to scan DNA until it finds its consensus sequence, where it cleaves and resolves the cruciform DNA. This Finegoldia magna (strain ATCC 29328 / DSM 20472 / WAL 2508) (Peptostreptococcus magnus) protein is Holliday junction branch migration complex subunit RuvA.